The following is a 120-amino-acid chain: Testis-expressed protein 48 (120 aa).

Polar residues predominate over residues 29–45 (KVPSQTQEHKPSTQNLL). The tract at residues 29-86 (KVPSQTQEHKPSTQNLLLQKDELDRQNPKRINAVSHLPSRTPLIQTKKSTSSSSSEFE) is disordered. Residues 74-83 (TKKSTSSSSS) are compositionally biased toward low complexity.

The chain is Testis-expressed protein 48 from Homo sapiens (Human).